Reading from the N-terminus, the 335-residue chain is MAAGWWFWCVSVTVAVALLIVCDVPSVSAQRKKEMVLSEKVCQLMEWTNKRPVIRMNGDKFRRLVKAPPRNYSVIVMFTALQLHRQCVVCKQADEEFQILANSWRYSSAFTNRIFFAMVDFDEGSDVFQMLNMNSAPTFINFPAKGKPKRGDTYELQVRGFSAEQIARWIADRTDVNIRVIRPPNYAGPLMLGLLLAVIGGLVYLRRSNMEFLFNKTGWAFAALCFVLAMTSGQMWNHIRGPPYAHKNPHTGHVNYIHGSSQAQFVAETHIVLLFNGGVTLGMVLLCEAATSDMDIGKRKIMCVAGIGLVVLFFSWMLSIFRSKYHGYPYSFLMS.

Residues 1–29 (MAAGWWFWCVSVTVAVALLIVCDVPSVSA) form the signal peptide. The Extracellular segment spans residues 30–184 (QRKKEMVLSE…DVNIRVIRPP (155 aa)). The Thioredoxin domain maps to 47–175 (WTNKRPVIRM…IARWIADRTD (129 aa)). The N-linked (GlcNAc...) asparagine glycan is linked to asparagine 71. A disulfide bond links cysteine 87 and cysteine 90. A helical transmembrane segment spans residues 185-205 (NYAGPLMLGLLLAVIGGLVYL). At 206–209 (RRSN) the chain is on the cytoplasmic side. A helical transmembrane segment spans residues 210 to 230 (MEFLFNKTGWAFAALCFVLAM). Topologically, residues 231–270 (TSGQMWNHIRGPPYAHKNPHTGHVNYIHGSSQAQFVAETH) are extracellular. The helical transmembrane segment at 271–291 (IVLLFNGGVTLGMVLLCEAAT) threads the bilayer. Residues 292–300 (SDMDIGKRK) lie on the Cytoplasmic side of the membrane. A helical transmembrane segment spans residues 301–321 (IMCVAGIGLVVLFFSWMLSIF). Residues 322-335 (RSKYHGYPYSFLMS) are Extracellular-facing.

It belongs to the OST3/OST6 family. In terms of assembly, accessory component of the STT3B-containing form of the oligosaccharyltransferase (OST) complex. OST exists in two different complex forms which contain common core subunits RPN1, RPN2, OST48, OST4, DAD1 and TMEM258, either STT3A or STT3B as catalytic subunits, and form-specific accessory subunits. OST can form stable complexes with the Sec61 complex or with both the Sec61 and TRAP complexes. The association of TUSC3 or MAGT1 with the STT3B-containing complex seems to be mutually exclusvice.

It is found in the cell membrane. Its subcellular location is the endoplasmic reticulum. The protein localises to the endoplasmic reticulum membrane. It functions in the pathway protein modification; protein glycosylation. Functionally, accessory component of the STT3B-containing form of the N-oligosaccharyl transferase (OST) complex which catalyzes the transfer of a high mannose oligosaccharide from a lipid-linked oligosaccharide donor to an asparagine residue within an Asn-X-Ser/Thr consensus motif in nascent polypeptide chains. Involved in N-glycosylation of STT3B-dependent substrates. Specifically required for the glycosylation of a subset of acceptor sites that are near cysteine residues; in this function seems to act redundantly with TUSC3. In its oxidized form proposed to form transient mixed disulfides with a glycoprotein substrate to facilitate access of STT3B to the unmodified acceptor site. Also has oxidoreductase-independent functions in the STT3B-containing OST complex possibly involving substrate recognition. Could indirectly play a role in Mg(2+) transport in epithelial cells. The sequence is that of Dolichyl-diphosphooligosaccharide--protein glycosyltransferase subunit MAGT1 from Pongo abelii (Sumatran orangutan).